Here is a 565-residue protein sequence, read N- to C-terminus: UvrABC system protein C (565 aa).

Residues 12–89 (EEPGVYIFKN…IRTHKPKYNV (78 aa)) form the GIY-YIG domain. Residues 195–230 (KDVLPTLYEKIEQYASNLAFEKAAFLRDQVLVLQNI) form the UVR domain.

Belongs to the UvrC family. In terms of assembly, interacts with UvrB in an incision complex.

It localises to the cytoplasm. Functionally, the UvrABC repair system catalyzes the recognition and processing of DNA lesions. UvrC both incises the 5' and 3' sides of the lesion. The N-terminal half is responsible for the 3' incision and the C-terminal half is responsible for the 5' incision. The sequence is that of UvrABC system protein C from Hydrogenobaculum sp. (strain Y04AAS1).